We begin with the raw amino-acid sequence, 482 residues long: Docking protein 1 (482 aa).

Met-1 carries the N-acetylmethionine modification. A PH domain is found at Ala-4 to Phe-119. Ser-48 bears the Phosphoserine mark. Positions Glu-151–Gly-259 constitute an IRS-type PTB domain. 2 positions are modified to phosphoserine: Ser-269 and Ser-290. Positions Ser-269–Gly-328 are disordered. Phosphotyrosine is present on residues Tyr-295, Tyr-336, Tyr-340, Tyr-361, and Tyr-376. Residues Thr-353–Arg-373 are disordered. Phosphotyrosine; by INSR is present on Tyr-397. A disordered region spans residues Glu-398–Thr-482. Tyr-408 carries the phosphotyrosine modification. Positions Val-410–Lys-423 are enriched in pro residues. The residue at position 415 (Ser-415) is a Phosphoserine. The segment covering Ser-432 to Ser-459 has biased composition (polar residues). Phosphotyrosine is present on Tyr-450.

The protein belongs to the DOK family. Type A subfamily. In terms of assembly, interacts with RasGAP, INPP5D/SHIP1 and ABL1. Interacts directly with phosphorylated ITGB3. Interacts with SRMS (via the SH2 and SH3 domains). Constitutively tyrosine-phosphorylated. Phosphorylated by TEC. Phosphorylated on tyrosine residues by the insulin receptor kinase. Results in the negative regulation of the insulin signaling pathway. Phosphorylated by LYN. Phosphorylated on tyrosine residues by SRMS. Expressed in lung, spleen, skeletal muscle and kidney.

Its subcellular location is the cytoplasm. The protein localises to the nucleus. DOK proteins are enzymatically inert adaptor or scaffolding proteins. They provide a docking platform for the assembly of multimolecular signaling complexes. DOK1 appears to be a negative regulator of the insulin signaling pathway. Modulates integrin activation by competing with talin for the same binding site on ITGB3. This chain is Docking protein 1 (Dok1), found in Mus musculus (Mouse).